Consider the following 61-residue polypeptide: Small ribosomal subunit protein uS14 (61 aa).

Residues cysteine 24, cysteine 27, cysteine 40, and cysteine 43 each coordinate Zn(2+).

It belongs to the universal ribosomal protein uS14 family. Zinc-binding uS14 subfamily. As to quaternary structure, part of the 30S ribosomal subunit. Contacts proteins S3 and S10. Requires Zn(2+) as cofactor.

In terms of biological role, binds 16S rRNA, required for the assembly of 30S particles and may also be responsible for determining the conformation of the 16S rRNA at the A site. The polypeptide is Small ribosomal subunit protein uS14 (Coprothermobacter proteolyticus (strain ATCC 35245 / DSM 5265 / OCM 4 / BT)).